Reading from the N-terminus, the 605-residue chain is Copper resistance protein A (605 aa).

Residues 1-41 (MLLKTSRRTFLKGLTLSGVAGSLGVWSFNARSSLSLPVAAS) constitute a signal peptide (tat-type signal). Residues His-100, His-102, His-142, and His-144 each coordinate Cu cation. Repeat copies occupy residues 382 to 389 (DHSQMGGM), 414 to 421 (DHSSMAGM), and 422 to 429 (DHSRMAGM). Residues 382–429 (DHSQMGGMDNSGEMMSMDGADLPDSGTSSAPMDHSSMAGMDHSRMAGM) form a 3 X 8 AA tandem repeats of D-H-X-X-M-X-G-M region. Cu cation-binding residues include His-538, His-541, His-543, His-586, Cys-587, His-588, His-592, and Met-597.

The protein belongs to the multicopper oxidase family. CopA subfamily. Post-translationally, predicted to be exported by the Tat system. The position of the signal peptide cleavage has not been experimentally proven.

Its subcellular location is the periplasm. Its function is as follows. Required for the copper-inducible expression of copper resistance. May have oxidase activity. The sequence is that of Copper resistance protein A (pcoA) from Escherichia coli.